A 200-amino-acid chain; its full sequence is Recombination protein RecR (200 aa).

The C4-type zinc-finger motif lies at 57-72; sequence CRQCRTLTEQELCPQC. Positions 80 to 175 constitute a Toprim domain; that stretch reads TQLCVVEGPV…TATRIAHGVP (96 aa).

Belongs to the RecR family.

Functionally, may play a role in DNA repair. It seems to be involved in an RecBC-independent recombinational process of DNA repair. It may act with RecF and RecO. The protein is Recombination protein RecR of Pseudomonas entomophila (strain L48).